The following is a 143-amino-acid chain: Large ribosomal subunit protein uL11 (143 aa).

Belongs to the universal ribosomal protein uL11 family. In terms of assembly, part of the ribosomal stalk of the 50S ribosomal subunit. Interacts with L10 and the large rRNA to form the base of the stalk. L10 forms an elongated spine to which L12 dimers bind in a sequential fashion forming a multimeric L10(L12)X complex. In terms of processing, one or more lysine residues are methylated.

In terms of biological role, forms part of the ribosomal stalk which helps the ribosome interact with GTP-bound translation factors. This chain is Large ribosomal subunit protein uL11, found in Stutzerimonas stutzeri (strain A1501) (Pseudomonas stutzeri).